The primary structure comprises 92 residues: UPF0237 protein MM_0082 (92 aa).

One can recognise an ACT domain in the interval 7–81; it reads IITVIGSDRV…KSLGVEVKVQ (75 aa).

It belongs to the UPF0237 family.

The polypeptide is UPF0237 protein MM_0082 (Methanosarcina mazei (strain ATCC BAA-159 / DSM 3647 / Goe1 / Go1 / JCM 11833 / OCM 88) (Methanosarcina frisia)).